We begin with the raw amino-acid sequence, 354 residues long: Protein RecA (354 aa).

67–74 (GPESSGKT) contacts ATP.

This sequence belongs to the RecA family.

The protein localises to the cytoplasm. Can catalyze the hydrolysis of ATP in the presence of single-stranded DNA, the ATP-dependent uptake of single-stranded DNA by duplex DNA, and the ATP-dependent hybridization of homologous single-stranded DNAs. It interacts with LexA causing its activation and leading to its autocatalytic cleavage. The chain is Protein RecA from Chlamydia muridarum (strain MoPn / Nigg).